The chain runs to 240 residues: MNESNSQDLTRVSPFYIKEGFSVYEFTEKLFEAYVIERINRFLVKVTLDGEEILVHLHDPGRLKELIYPGNLVLIRETKGNKTKFSITAAYANSRFIVLDSRLHNIIASKFIPKIYEKEVKVGNSRIDFKYDNTYLEVKGCTLVENEIAYFPDAPTERGRKHLKELRELMRKGFNAILLILVMRNDAKCFLPNEKTDPKFSVEFWDSIKEGLKVYIKTFSLIGNKIVYVGDIPLCKTNLT.

This sequence belongs to the SfsA family.

This is Sugar fermentation stimulation protein homolog from Saccharolobus solfataricus (strain ATCC 35092 / DSM 1617 / JCM 11322 / P2) (Sulfolobus solfataricus).